The primary structure comprises 341 residues: Biotin synthase (341 aa).

The Radical SAM core domain occupies 40-267 (AEIQVSTLLS…RSMVRLSAGR (228 aa)). [4Fe-4S] cluster-binding residues include Cys55, Cys59, and Cys62. [2Fe-2S] cluster-binding residues include Cys99, Cys130, Cys190, and Arg262.

It belongs to the radical SAM superfamily. Biotin synthase family. Homodimer. [4Fe-4S] cluster is required as a cofactor. It depends on [2Fe-2S] cluster as a cofactor.

It catalyses the reaction (4R,5S)-dethiobiotin + (sulfur carrier)-SH + 2 reduced [2Fe-2S]-[ferredoxin] + 2 S-adenosyl-L-methionine = (sulfur carrier)-H + biotin + 2 5'-deoxyadenosine + 2 L-methionine + 2 oxidized [2Fe-2S]-[ferredoxin]. Its pathway is cofactor biosynthesis; biotin biosynthesis; biotin from 7,8-diaminononanoate: step 2/2. Functionally, catalyzes the conversion of dethiobiotin (DTB) to biotin by the insertion of a sulfur atom into dethiobiotin via a radical-based mechanism. In Xylella fastidiosa (strain M23), this protein is Biotin synthase.